The chain runs to 102 residues: Small ribosomal subunit protein uS10 (102 aa).

It belongs to the universal ribosomal protein uS10 family. As to quaternary structure, part of the 30S ribosomal subunit.

Involved in the binding of tRNA to the ribosomes. The polypeptide is Small ribosomal subunit protein uS10 (Paracoccus denitrificans (strain Pd 1222)).